The sequence spans 339 residues: DNA-directed RNA polymerase subunit alpha (339 aa).

The alpha N-terminal domain (alpha-NTD) stretch occupies residues 1–234 (MIEKNWQELI…DQFQIFINFE (234 aa)). Positions 251 to 339 (FNPALLRKVD…DLAKRFEDHV (89 aa)) are alpha C-terminal domain (alpha-CTD).

This sequence belongs to the RNA polymerase alpha chain family. As to quaternary structure, homodimer. The RNAP catalytic core consists of 2 alpha, 1 beta, 1 beta' and 1 omega subunit. When a sigma factor is associated with the core the holoenzyme is formed, which can initiate transcription.

The enzyme catalyses RNA(n) + a ribonucleoside 5'-triphosphate = RNA(n+1) + diphosphate. In terms of biological role, DNA-dependent RNA polymerase catalyzes the transcription of DNA into RNA using the four ribonucleoside triphosphates as substrates. The sequence is that of DNA-directed RNA polymerase subunit alpha from Maricaulis maris (strain MCS10) (Caulobacter maris).